The following is a 312-amino-acid chain: Malate dehydrogenase (312 aa).

NAD(+) is bound by residues 7 to 13 and Asp-34; that span reads GAAGGIG. 2 residues coordinate substrate: Arg-81 and Arg-87. NAD(+) contacts are provided by residues Asn-94 and 117–119; that span reads ITN. 2 residues coordinate substrate: Asn-119 and Arg-153. His-177 functions as the Proton acceptor in the catalytic mechanism. NAD(+) is bound at residue Met-227.

The protein belongs to the LDH/MDH superfamily. MDH type 1 family. In terms of assembly, homodimer.

The enzyme catalyses (S)-malate + NAD(+) = oxaloacetate + NADH + H(+). Catalyzes the reversible oxidation of malate to oxaloacetate. The protein is Malate dehydrogenase of Escherichia coli O17:K52:H18 (strain UMN026 / ExPEC).